The chain runs to 381 residues: ELMO domain-containing protein 3 (381 aa).

The disordered stretch occupies residues 1-31 (MNEKSCSFHSKEELRDGQGERLSAGYSPSYD). Positions 9–19 (HSKEELRDGQG) are enriched in basic and acidic residues. The region spanning 170–324 (VHGRVLQTIY…ELEVLAKKSP (155 aa)) is the ELMO domain.

As to expression, both isoform 1 and isoform 6 are widely expressed.

It localises to the cell projection. The protein resides in the stereocilium. The protein localises to the kinocilium. It is found in the cytoplasm. Its subcellular location is the cytoskeleton. Its function is as follows. Acts as a GTPase-activating protein (GAP) for ARL2 with low specific activity. This Homo sapiens (Human) protein is ELMO domain-containing protein 3 (ELMOD3).